The primary structure comprises 458 residues: UDP-N-acetylmuramoylalanine--D-glutamate ligase (458 aa).

124 to 130 (GSDGKTT) contributes to the ATP binding site.

This sequence belongs to the MurCDEF family.

It is found in the cytoplasm. It catalyses the reaction UDP-N-acetyl-alpha-D-muramoyl-L-alanine + D-glutamate + ATP = UDP-N-acetyl-alpha-D-muramoyl-L-alanyl-D-glutamate + ADP + phosphate + H(+). It functions in the pathway cell wall biogenesis; peptidoglycan biosynthesis. Its function is as follows. Cell wall formation. Catalyzes the addition of glutamate to the nucleotide precursor UDP-N-acetylmuramoyl-L-alanine (UMA). In Clostridium beijerinckii (strain ATCC 51743 / NCIMB 8052) (Clostridium acetobutylicum), this protein is UDP-N-acetylmuramoylalanine--D-glutamate ligase.